The sequence spans 192 residues: Large ribosomal subunit protein uL18 (192 aa).

It belongs to the universal ribosomal protein uL18 family. Part of the 50S ribosomal subunit. Contacts the 5S and 23S rRNAs.

This is one of the proteins that bind and probably mediate the attachment of the 5S RNA into the large ribosomal subunit, where it forms part of the central protuberance. In Methanothermobacter thermautotrophicus (strain ATCC 29096 / DSM 1053 / JCM 10044 / NBRC 100330 / Delta H) (Methanobacterium thermoautotrophicum), this protein is Large ribosomal subunit protein uL18.